The following is a 356-amino-acid chain: S-adenosylmethionine:tRNA ribosyltransferase-isomerase (356 aa).

It belongs to the QueA family. As to quaternary structure, monomer.

The protein localises to the cytoplasm. It catalyses the reaction 7-aminomethyl-7-carbaguanosine(34) in tRNA + S-adenosyl-L-methionine = epoxyqueuosine(34) in tRNA + adenine + L-methionine + 2 H(+). It participates in tRNA modification; tRNA-queuosine biosynthesis. Its function is as follows. Transfers and isomerizes the ribose moiety from AdoMet to the 7-aminomethyl group of 7-deazaguanine (preQ1-tRNA) to give epoxyqueuosine (oQ-tRNA). This chain is S-adenosylmethionine:tRNA ribosyltransferase-isomerase, found in Enterobacter sp. (strain 638).